A 179-amino-acid polypeptide reads, in one-letter code: Cytochrome b6-f complex iron-sulfur subunit 1 (179 aa).

A helical transmembrane segment spans residues 21–43 (LLTFGTVTGVALGALYPVVNYFI). Residues 61–162 (GNDVSVSKFL…AKTENDKIVL (102 aa)) form the Rieske domain. Positions 108, 110, 126, and 129 each coordinate [2Fe-2S] cluster. An intrachain disulfide couples Cys-113 to Cys-128.

The protein belongs to the Rieske iron-sulfur protein family. In terms of assembly, the 4 large subunits of the cytochrome b6-f complex are cytochrome b6, subunit IV (17 kDa polypeptide, PetD), cytochrome f and the Rieske protein, while the 4 small subunits are PetG, PetL, PetM and PetN. The complex functions as a dimer. [2Fe-2S] cluster is required as a cofactor.

It localises to the cellular thylakoid membrane. It carries out the reaction 2 oxidized [plastocyanin] + a plastoquinol + 2 H(+)(in) = 2 reduced [plastocyanin] + a plastoquinone + 4 H(+)(out). Its function is as follows. Component of the cytochrome b6-f complex, which mediates electron transfer between photosystem II (PSII) and photosystem I (PSI), cyclic electron flow around PSI, and state transitions. This chain is Cytochrome b6-f complex iron-sulfur subunit 1, found in Trichormus variabilis (strain ATCC 29413 / PCC 7937) (Anabaena variabilis).